A 57-amino-acid polypeptide reads, in one-letter code: Defensin-like protein 302 (57 aa).

3 cysteine pairs are disulfide-bonded: Cys19/Cys39, Cys26/Cys44, and Cys32/Cys46.

Belongs to the DEFL family.

The sequence is that of Defensin-like protein 302 from Arabidopsis thaliana (Mouse-ear cress).